An 890-amino-acid polypeptide reads, in one-letter code: Alanine--tRNA ligase (890 aa).

Zn(2+)-binding residues include His-569, His-573, Cys-671, and His-675.

It belongs to the class-II aminoacyl-tRNA synthetase family. Zn(2+) is required as a cofactor.

It localises to the cytoplasm. The enzyme catalyses tRNA(Ala) + L-alanine + ATP = L-alanyl-tRNA(Ala) + AMP + diphosphate. Its function is as follows. Catalyzes the attachment of alanine to tRNA(Ala) in a two-step reaction: alanine is first activated by ATP to form Ala-AMP and then transferred to the acceptor end of tRNA(Ala). Also edits incorrectly charged Ser-tRNA(Ala) and Gly-tRNA(Ala) via its editing domain. The sequence is that of Alanine--tRNA ligase from Synechococcus sp. (strain CC9902).